A 326-amino-acid chain; its full sequence is Acetyl-coenzyme A carboxylase carboxyl transferase subunit beta (326 aa).

The region spanning 25 to 308 (LWVKCPASGE…RRDDRSTLQL (284 aa)) is the CoA carboxyltransferase N-terminal domain. A disordered region spans residues 298–326 (RRRDDRSTLQLTPPKTHAPKPPEPKVKPD). A compositionally biased stretch (basic and acidic residues) spans 317–326 (KPPEPKVKPD).

Belongs to the AccD/PCCB family. Acetyl-CoA carboxylase is a heterohexamer composed of biotin carboxyl carrier protein (AccB), biotin carboxylase (AccC) and two subunits each of ACCase subunit alpha (AccA) and ACCase subunit beta (AccD).

It is found in the cytoplasm. The catalysed reaction is N(6)-carboxybiotinyl-L-lysyl-[protein] + acetyl-CoA = N(6)-biotinyl-L-lysyl-[protein] + malonyl-CoA. It functions in the pathway lipid metabolism; malonyl-CoA biosynthesis; malonyl-CoA from acetyl-CoA: step 1/1. Its function is as follows. Component of the acetyl coenzyme A carboxylase (ACC) complex. Biotin carboxylase (BC) catalyzes the carboxylation of biotin on its carrier protein (BCCP) and then the CO(2) group is transferred by the transcarboxylase to acetyl-CoA to form malonyl-CoA. The sequence is that of Acetyl-coenzyme A carboxylase carboxyl transferase subunit beta from Hyphomonas neptunium (strain ATCC 15444).